A 1134-amino-acid polypeptide reads, in one-letter code: Sterol regulatory element-binding protein 1 (1134 aa).

The interval 1-60 is transcriptional activation (acidic); it reads MDELAFGEAALEQTLAEMCELDTAVLNDIEDMLQLINNQDSDFPGLFDAPYAGGETGDTG. The Cytoplasmic segment spans residues 1 to 477; the sequence is MDELAFGEAA…HSRGMLDRSR (477 aa). A 9aaTAD motif is present at residues 27-35; it reads NDIEDMLQL. Residues 46–73 are disordered; the sequence is LFDAPYAGGETGDTGPSSPGANSPESFS. Positions 59-69 are enriched in polar residues; sequence TGPSSPGANSP. A phosphoserine mark is found at S96 and S115. 2 disordered regions span residues 130 to 149 and 170 to 195; these read LQPAAPQPSPGTLLPPSFPA and SGTLPGNTQQPPSSLPLAPAPGVLPT. Residues 170–179 show a composition bias toward polar residues; that stretch reads SGTLPGNTQQ. The interval 227–487 is interaction with LMNA; sequence QQVPVVLQPH…LALCVLAFLC (261 aa). One can recognise a bHLH domain in the interval 317–367; it reads EKRTAHNAIEKRYRSSINDKIVELKDLVVGTEAKLNKSAVLRKAIDYIRFL. 2 positions are modified to phosphoserine; by SIK1: S331 and S332. The leucine-zipper stretch occupies residues 367-388; sequence LQHSNQKLKQENLTLRSAHKSK. The residue at position 389 (S389) is a Phosphoserine; by AMPK. S395 is modified (phosphoserine; by SIK1). A disordered region spans residues 415 to 468; it reads VETLTPPPSDAGSPSQSSPLSFGSRASSSGGSDSEPDSPAFEDSQVKAQRLPSH. Positions 424–453 are enriched in low complexity; that stretch reads DAGSPSQSSPLSFGSRASSSGGSDSEPDSP. Phosphoserine is present on S448. Residues 478–498 form a helical membrane-spanning segment; sequence LALCVLAFLCLTCNPLASLFG. Over 499–536 the chain is Lumenal; that stretch reads WGILTPSDATGTHRSSGRSMLEAESRDGSNWTQWLLPP. The helical transmembrane segment at 537–557 threads the bilayer; it reads LVWLANGLLVLACLALLFVYG. At 558–1134 the chain is on the cytoplasmic side; the sequence is EPVTRPHSGP…LGGGTTVTSS (577 aa). Residue S1047 is modified to Phosphoserine.

It belongs to the SREBP family. Forms a tight complex with SCAP, the SCAP-SREBP complex, in the endoplasmic reticulum membrane and the Golgi apparatus. Interacts with PAQR3; the interaction anchors the SCAP-SREBP complex to the Golgi apparatus in low cholesterol conditions. In terms of assembly, efficient DNA binding of the soluble transcription factor fragment requires dimerization with another bHLH protein. Interacts with CEBPA, the interaction produces a transcriptional synergy. Interacts with LMNA. In terms of processing, processed in the Golgi apparatus, releasing the protein from the membrane. At low cholesterol the SCAP-SREBP complex is recruited into COPII vesicles for export from the endoplasmic reticulum. In the Golgi, complex SREBPs are cleaved sequentially by site-1 (MBTPS1, S1P) and site-2 (MBTPS2, S2P) proteases. The first cleavage by site-1 protease occurs within the luminal loop, the second cleavage by site-2 protease occurs within the first transmembrane domain, releasing the transcription factor from the Golgi membrane. Phosphorylated by AMPK, leading to suppress protein processing and nuclear translocation, and repress target gene expression. Phosphorylation at Ser-389 by SIK1 represses activity possibly by inhibiting DNA-binding. Post-translationally, SCAP-free SREBF1 is ubiquitinated by the BCR(ARMC5) complex, leading to its degradation. In terms of processing, ubiquitinated; the nuclear form has a rapid turnover and is rapidly ubiquitinated and degraded by the proteasome in the nucleus. As to expression, predominant isoform expressed in most tissues. Predominates in liver, adrenal gland, brain and adipose tissue. Also found in kidney, thymus, testis, muscle, jejunum, and ileum. Expressed only in select tissues, such as intestinal epithelial, heart, macrophage and bone marrow dendritic cells. Also found in kidney, thymus, testis, muscle, jejunum, and ileum.

The protein localises to the endoplasmic reticulum membrane. It localises to the golgi apparatus membrane. It is found in the cytoplasmic vesicle. Its subcellular location is the COPII-coated vesicle membrane. The protein resides in the nucleus. Its activity is regulated as follows. Activation by cleavage is down-regulated upon activation of SIRT3-dependent PRKAA1/AMPK-alpha signaling cascade which leads to inhibition of ATP-consuming lipogenesis to restore cellular energy balance. Precursor of the transcription factor form (Processed sterol regulatory element-binding protein 1), which is embedded in the endoplasmic reticulum membrane. Low sterol concentrations promote processing of this form, releasing the transcription factor form that translocates into the nucleus and activates transcription of genes involved in cholesterol biosynthesis and lipid homeostasis. Its function is as follows. Key transcription factor that regulates expression of genes involved in cholesterol biosynthesis and lipid homeostasis. Binds to the sterol regulatory element 1 (SRE-1) (5'-ATCACCCCAC-3'). Has dual sequence specificity binding to both an E-box motif (5'-ATCACGTGA-3') and to SRE-1 (5'-ATCACCCCAC-3'). Regulates the promoters of genes involved in cholesterol biosynthesis and the LDL receptor (LDLR) pathway of sterol regulation. Functionally, isoform expressed only in select tissues, which has higher transcriptional activity compared to SREBP-1C. Able to stimulate both lipogenic and cholesterogenic gene expression. Has a role in the nutritional regulation of fatty acids and triglycerides in lipogenic organs such as the liver. Required for innate immune response in macrophages by regulating lipid metabolism. In terms of biological role, predominant isoform expressed in most tissues, which has weaker transcriptional activity compared to isoform SREBP-1A. Primarily controls expression of lipogenic gene. Strongly activates global lipid synthesis in rapidly growing cells. The protein is Sterol regulatory element-binding protein 1 of Mus musculus (Mouse).